Reading from the N-terminus, the 2258-residue chain is Probable serine/threonine-protein kinase ifkA (2258 aa).

Disordered regions lie at residues 43-108 and 189-308; these read RVNS…HQMG and EMNN…KEND. The segment covering 45–57 has biased composition (low complexity); it reads NSSDDINNNNNNN. Residues 58 to 100 show a composition bias toward acidic residues; sequence NDDDDDNDDYDDSDDENSDSDYDDYDDSDDENSDDEFYSDDED. A compositionally biased stretch (low complexity) spans 191–301; it reads NNLTNSNNSN…NKELIDNNNN (111 aa). Positions 273-309 form a coiled coil; that stretch reads NNNNNISNNKINKINNNNNNKELIDNNNNNKDKENDL. Residues 319-691 form the Protein kinase 1 domain; it reads WKKGSCIERK…AGILLKHPFL (373 aa). Residues 325–333 and K348 each bind ATP; that span reads IERKSNYSV. Residues 358–398 are disordered; sequence SSSSLTSLSNSNNNNSNNNNNNNNNNNNNNNNNNNNNNNNN. The span at 359–398 shows a compositional bias: low complexity; the sequence is SSSLTSLSNSNNNNSNNNNNNNNNNNNNNNNNNNNNNNNN. Residue D498 is the Proton acceptor of the active site. 2 disordered regions span residues 741–768 and 782–870; these read KSQT…NGSN and PLAT…MTPL. Residues 746 to 768 are compositionally biased toward low complexity; it reads NNNNDNNNLASSNELLSSSNGSN. A compositionally biased stretch (polar residues) spans 782 to 791; that stretch reads PLATSSSLDN. The span at 793–805 shows a compositional bias: pro residues; sequence TPPPSRPISPKPS. Low complexity predominate over residues 841-870; that stretch reads PQQNFNTPPTTTTTTTTPTATPTTPTMTPL. Residues 894 to 1482 enclose the Protein kinase 2 domain; the sequence is FEEIEMIGKG…TKQLLESGLL (589 aa). ATP contacts are provided by residues 900 to 908 and K923; that span reads IGKGGFGVV. Over residues 1053-1094 the composition is skewed to low complexity; sequence TLSSSNTSSSSSLLSNNKSKILNTSKSTSTNTSTSTSTSNTN. A disordered region spans residues 1053 to 1259; sequence TLSSSNTSSS…SSSRKKPPKE (207 aa). The segment covering 1095-1106 has biased composition (basic residues); it reads KNKKISKKKKSK. Residues 1156–1185 show a composition bias toward low complexity; that stretch reads NNNNNNDNNNNYHSDNESDSFSGSISMSDG. A compositionally biased stretch (acidic residues) spans 1206-1233; the sequence is DENENDDDDEEDDDDEYDEEDDDYETFD. The span at 1242-1251 shows a compositional bias: low complexity; sequence SNNSKLSTSS. Residue D1313 is the Proton acceptor of the active site. Disordered regions lie at residues 1343–1370 and 2048–2104; these read KSDD…TAQQ and GSGG…QQTS. Residues 1347–1368 show a composition bias toward low complexity; that stretch reads LNSSTSNTANNINLSSSTNSTA. The span at 2048–2072 shows a compositional bias: gly residues; the sequence is GSGGSGGSGGGSSMSSGGGGGGNSN. The span at 2085–2099 shows a compositional bias: low complexity; the sequence is SNQSTSSSGNSNNSN.

It belongs to the protein kinase superfamily. Ser/Thr protein kinase family.

It catalyses the reaction L-seryl-[protein] + ATP = O-phospho-L-seryl-[protein] + ADP + H(+). The catalysed reaction is L-threonyl-[protein] + ATP = O-phospho-L-threonyl-[protein] + ADP + H(+). Phosphorylates eIF2-alpha, from 1 to 7 hours after the onset of development or during the preaggregation state, resulting in a shift from polysomes to free ribosomes for bulk mRNA. This Dictyostelium discoideum (Social amoeba) protein is Probable serine/threonine-protein kinase ifkA (ifkA).